The sequence spans 134 residues: Small ribosomal subunit protein uS9 (134 aa).

Residues 113–134 (REVERKKYGLKKARRAPQFSKR) form a disordered region. Positions 120–134 (YGLKKARRAPQFSKR) are enriched in basic residues.

Belongs to the universal ribosomal protein uS9 family.

This is Small ribosomal subunit protein uS9 from Thermotoga petrophila (strain ATCC BAA-488 / DSM 13995 / JCM 10881 / RKU-1).